The following is a 916-amino-acid chain: Isoleucine--tRNA ligase (916 aa).

The short motif at 57–67 is the 'HIGH' region element; the sequence is PYANGNLHMGH. E554 is an L-isoleucyl-5'-AMP binding site. Residues 595–599 carry the 'KMSKS' region motif; that stretch reads KMSKS. An ATP-binding site is contributed by K598. C885, C888, C905, and C908 together coordinate Zn(2+).

Belongs to the class-I aminoacyl-tRNA synthetase family. IleS type 1 subfamily. Monomer. It depends on Zn(2+) as a cofactor.

The protein resides in the cytoplasm. It carries out the reaction tRNA(Ile) + L-isoleucine + ATP = L-isoleucyl-tRNA(Ile) + AMP + diphosphate. In terms of biological role, catalyzes the attachment of isoleucine to tRNA(Ile). As IleRS can inadvertently accommodate and process structurally similar amino acids such as valine, to avoid such errors it has two additional distinct tRNA(Ile)-dependent editing activities. One activity is designated as 'pretransfer' editing and involves the hydrolysis of activated Val-AMP. The other activity is designated 'posttransfer' editing and involves deacylation of mischarged Val-tRNA(Ile). The protein is Isoleucine--tRNA ligase of Staphylococcus saprophyticus subsp. saprophyticus (strain ATCC 15305 / DSM 20229 / NCIMB 8711 / NCTC 7292 / S-41).